The following is a 329-amino-acid chain: 4-hydroxythreonine-4-phosphate dehydrogenase (329 aa).

Substrate contacts are provided by His-136 and Thr-137. Residues His-166, His-211, and His-266 each contribute to the a divalent metal cation site. Substrate contacts are provided by Lys-274, Asn-283, and Arg-292.

Belongs to the PdxA family. As to quaternary structure, homodimer. Zn(2+) serves as cofactor. Mg(2+) is required as a cofactor. The cofactor is Co(2+).

Its subcellular location is the cytoplasm. The catalysed reaction is 4-(phosphooxy)-L-threonine + NAD(+) = 3-amino-2-oxopropyl phosphate + CO2 + NADH. It participates in cofactor biosynthesis; pyridoxine 5'-phosphate biosynthesis; pyridoxine 5'-phosphate from D-erythrose 4-phosphate: step 4/5. Functionally, catalyzes the NAD(P)-dependent oxidation of 4-(phosphooxy)-L-threonine (HTP) into 2-amino-3-oxo-4-(phosphooxy)butyric acid which spontaneously decarboxylates to form 3-amino-2-oxopropyl phosphate (AHAP). The protein is 4-hydroxythreonine-4-phosphate dehydrogenase of Neisseria meningitidis serogroup B (strain ATCC BAA-335 / MC58).